Consider the following 840-residue polypeptide: Phosphatidylglycerol lysyltransferase (840 aa).

At Met1–Lys8 the chain is on the cytoplasmic side. The helical transmembrane segment at Ile9–Leu29 threads the bilayer. The Extracellular segment spans residues Tyr30 to Ser52. A helical membrane pass occupies residues Leu53–Ile73. Residues Leu74–Arg89 lie on the Cytoplasmic side of the membrane. The helical transmembrane segment at Val90 to Gly110 threads the bilayer. Topologically, residues Val111–His128 are extracellular. A helical transmembrane segment spans residues Phe129–Val149. Over Phe150–Lys161 the chain is Cytoplasmic. Residues Ile162–Tyr182 form a helical membrane-spanning segment. At Ser183–Thr200 the chain is on the extracellular side. A helical membrane pass occupies residues Leu201–Val221. Residues Asp222–Ser229 lie on the Cytoplasmic side of the membrane. Residues Phe230–Phe250 traverse the membrane as a helical segment. Over Gly251–Val271 the chain is Extracellular. A helical transmembrane segment spans residues Leu272–Ile292. The Cytoplasmic portion of the chain corresponds to Leu293–Ser337. Residues Leu338 to Tyr358 traverse the membrane as a helical segment. The Extracellular segment spans residues Asp359–Tyr369. A helical transmembrane segment spans residues Tyr370 to Ile390. Over Tyr391–Ser394 the chain is Cytoplasmic. The next 2 membrane-spanning stretches (helical) occupy residues Arg395 to Thr415 and Tyr416 to Phe436. The Cytoplasmic segment spans residues Arg437–Asn450. Residues Ile451 to Gly471 form a helical membrane-spanning segment. At Thr472–Arg489 the chain is on the extracellular side. Residues Tyr490–Phe510 form a helical membrane-spanning segment. The Cytoplasmic segment spans residues Asp511 to Lys840.

The protein belongs to the LPG synthase family.

Its subcellular location is the cell membrane. It catalyses the reaction L-lysyl-tRNA(Lys) + a 1,2-diacyl-sn-glycero-3-phospho-(1'-sn-glycerol) = a 1,2-diacyl-sn-glycero-3-phospho-1'-(3'-O-L-lysyl)-sn-glycerol + tRNA(Lys). Catalyzes the transfer of a lysyl group from L-lysyl-tRNA(Lys) to membrane-bound phosphatidylglycerol (PG), which produces lysylphosphatidylglycerol (LPG), a major component of the bacterial membrane with a positive net charge. LPG synthesis contributes to bacterial virulence as it is involved in the resistance mechanism against cationic antimicrobial peptides (CAMP) produces by the host's immune system (defensins, cathelicidins) and by the competing microorganisms (bacteriocins). In fact, the modification of anionic phosphatidylglycerol with positively charged L-lysine results in repulsion of the peptides. In Staphylococcus aureus (strain MSSA476), this protein is Phosphatidylglycerol lysyltransferase (mprF).